We begin with the raw amino-acid sequence, 496 residues long: Genome polyprotein (496 aa).

Residues 1 to 447 (SRCTHLENRD…HTVLGGAFNS (447 aa)) are Extracellular-facing. Intrachain disulfides connect Cys3/Cys30, Cys60/Cys116, Cys60/Cys121, Cys74/Cys105, Cys92/Cys116, and Cys92/Cys121. Positions 98–111 (DRGWGNHCGLFGKG) are fusion peptide. N-linked (GlcNAc...) asparagine; by host glycosylation occurs at Asn154. Cystine bridges form between Cys186–Cys290 and Cys307–Cys338. A helical transmembrane segment spans residues 448–468 (IFGGVGFLPKLLMGVALAWLG). Residues 469–479 (LNTRNPTMSMS) are Cytoplasmic-facing. The helical transmembrane segment at 480–496 (FLLAGGLVLAMTLGVGA) threads the bilayer.

In terms of assembly, homodimer; in the endoplasmic reticulum and Golgi. Post-translationally, N-glycosylated.

The protein resides in the virion membrane. It localises to the host endoplasmic reticulum membrane. Its function is as follows. Binds to host cell surface receptor and mediates fusion between viral and cellular membranes. Envelope protein is synthesized in the endoplasmic reticulum in the form of heterodimer with protein prM. They play a role in virion budding in the ER, and the newly formed immature particle is covered with 60 spikes composed of heterodimer between precursor prM and envelope protein E. The virion is transported to the Golgi apparatus where the low pH causes dissociation of PrM-E heterodimers and formation of E homodimers. prM-E cleavage is ineficient, and many virions are only partially matured. These uncleaved prM would play a role in immune evasion. The chain is Genome polyprotein from Louping ill virus (strain Negishi 3248/49/P10) (Li).